Here is a 224-residue protein sequence, read N- to C-terminus: Ribonuclease HII (224 aa).

Positions 1–210 (MKIGGIDEAG…VRKIEESIKA (210 aa)) constitute an RNase H type-2 domain. Residues Asp-7, Glu-8, and Asp-105 each contribute to the a divalent metal cation site.

It belongs to the RNase HII family. Requires Mn(2+) as cofactor. Mg(2+) serves as cofactor.

The protein localises to the cytoplasm. The catalysed reaction is Endonucleolytic cleavage to 5'-phosphomonoester.. In terms of biological role, endonuclease that specifically degrades the RNA of RNA-DNA hybrids. The protein is Ribonuclease HII of Pyrococcus furiosus (strain ATCC 43587 / DSM 3638 / JCM 8422 / Vc1).